We begin with the raw amino-acid sequence, 443 residues long: Probable glycine dehydrogenase (decarboxylating) subunit 1 (443 aa).

The protein belongs to the GcvP family. N-terminal subunit subfamily. In terms of assembly, the glycine cleavage system is composed of four proteins: P, T, L and H. In this organism, the P 'protein' is a heterodimer of two subunits.

The enzyme catalyses N(6)-[(R)-lipoyl]-L-lysyl-[glycine-cleavage complex H protein] + glycine + H(+) = N(6)-[(R)-S(8)-aminomethyldihydrolipoyl]-L-lysyl-[glycine-cleavage complex H protein] + CO2. Functionally, the glycine cleavage system catalyzes the degradation of glycine. The P protein binds the alpha-amino group of glycine through its pyridoxal phosphate cofactor; CO(2) is released and the remaining methylamine moiety is then transferred to the lipoamide cofactor of the H protein. The protein is Probable glycine dehydrogenase (decarboxylating) subunit 1 of Koribacter versatilis (strain Ellin345).